A 546-amino-acid polypeptide reads, in one-letter code: NAD(P)H-quinone oxidoreductase chain 4 (546 aa).

A run of 14 helical transmembrane segments spans residues 24 to 44, 56 to 76, 108 to 128, 132 to 152, 156 to 176, 188 to 208, 232 to 252, 263 to 283, 297 to 317, 326 to 346, 352 to 372, 396 to 416, 437 to 457, and 484 to 504; these read FPWL…IPFF, FALS…INGF, MPLI…AWPV, PKLF…VFAV, LLFF…LAIW, FIIY…AMGF, ILCY…VPLH, TAPV…YALL, FSPL…LTSF, IAYS…SFSS, AMLQ…LVGA, FALW…SGFV, VIMA…LLSM, and IYII…PRLV.

This sequence belongs to the complex I subunit 4 family.

Its subcellular location is the cellular thylakoid membrane. It carries out the reaction a plastoquinone + NADH + (n+1) H(+)(in) = a plastoquinol + NAD(+) + n H(+)(out). It catalyses the reaction a plastoquinone + NADPH + (n+1) H(+)(in) = a plastoquinol + NADP(+) + n H(+)(out). In terms of biological role, NDH-1 shuttles electrons from NAD(P)H, via FMN and iron-sulfur (Fe-S) centers, to quinones in the respiratory chain. The immediate electron acceptor for the enzyme in this species is believed to be plastoquinone. Couples the redox reaction to proton translocation (for every two electrons transferred, four hydrogen ions are translocated across the cytoplasmic membrane), and thus conserves the redox energy in a proton gradient. The polypeptide is NAD(P)H-quinone oxidoreductase chain 4 (Prochlorococcus marinus subsp. pastoris (strain CCMP1986 / NIES-2087 / MED4)).